The chain runs to 399 residues: Endo-1,4-beta-xylanase C (399 aa).

The N-terminal stretch at 1-20 (MFKFSASLAALAALVPFVAA) is a signal peptide. The CBM1 domain maps to 21 to 56 (QSPEWGQCGGIGWTGPTTCVAGTTCVESNPYYSQCL). The GH10 domain maps to 81–396 (SAKLHTLAKA…KPAFNGIAAG (316 aa)). Glutamate 212 functions as the Proton donor in the catalytic mechanism. Glutamate 318 (nucleophile) is an active-site residue. Cysteine 346 and cysteine 352 form a disulfide bridge.

Belongs to the glycosyl hydrolase 10 (cellulase F) family.

The protein resides in the secreted. The enzyme catalyses Endohydrolysis of (1-&gt;4)-beta-D-xylosidic linkages in xylans.. The protein operates within glycan degradation; xylan degradation. In terms of biological role, endo-1,4-beta-xylanase involved in the hydrolysis of xylan, a major structural heterogeneous polysaccharide found in plant biomass representing the second most abundant polysaccharide in the biosphere, after cellulose. The sequence is that of Endo-1,4-beta-xylanase C (xynC) from Phanerodontia chrysosporium (White-rot fungus).